Reading from the N-terminus, the 422-residue chain is MSEIISVISREILDSRGNPTVEVEVTTADGNMGRAAVPSGASTGAHEACELRDGDKNRFLGKGVYKAVDNVREKIAPEIVGLQATEQVYIDKILRDIDGTENKSNLGANAILGVSLAVAKAAAKDCRLPLYRYVGGSQASRLPVPLMNVLNGGAHANNGLDIQEFMIVPTVNNSYAESLRAGTEIFHTLKKILAKKGLSTAVGDEGGFAPKLGSNQEALDLLMNAIVDAGYDPGQNVFLALDVAATEMFKEGKYEWQGGHISPTELLGIYKSWAEKYPLVSIEDGFAEDDWDSWVQSTAQMGSTMQLIGDDLFVTNPKRLRMGLEKKAGNALLVKVNQIGTLTETYEAVNLAQRNKFRTIMSHRSGETEDVTIADLAVGLNCHQIKTGSLCRGERTAKYNQLLRIEEDLGGMGLYWDKAAFR.

Q163 contacts (2R)-2-phosphoglycerate. E205 (proton donor) is an active-site residue. Positions 242, 283, and 310 each coordinate Mg(2+). (2R)-2-phosphoglycerate-binding residues include K335, R364, S365, and K386. The Proton acceptor role is filled by K335.

The protein belongs to the enolase family. Mg(2+) is required as a cofactor.

It localises to the cytoplasm. Its subcellular location is the secreted. The protein resides in the cell surface. The catalysed reaction is (2R)-2-phosphoglycerate = phosphoenolpyruvate + H2O. It participates in carbohydrate degradation; glycolysis; pyruvate from D-glyceraldehyde 3-phosphate: step 4/5. In terms of biological role, catalyzes the reversible conversion of 2-phosphoglycerate (2-PG) into phosphoenolpyruvate (PEP). It is essential for the degradation of carbohydrates via glycolysis. This chain is Enolase, found in Bdellovibrio bacteriovorus (strain ATCC 15356 / DSM 50701 / NCIMB 9529 / HD100).